Consider the following 546-residue polypeptide: Probable sucrose-6-phosphate hydrolase (546 aa).

Residues 105-108, glutamine 124, 167-168, 228-229, and glutamate 283 contribute to the substrate site; these read LLND, FS, and RD. Aspartate 108 is an active-site residue.

It belongs to the glycosyl hydrolase 32 family.

It localises to the cytoplasm. It catalyses the reaction Hydrolysis of terminal non-reducing beta-D-fructofuranoside residues in beta-D-fructofuranosides.. It functions in the pathway glycan biosynthesis; sucrose metabolism. Functionally, enables the bacterium to metabolize sucrose as a sole carbon source. The protein is Probable sucrose-6-phosphate hydrolase (cscA) of Vibrio cholerae serotype O1 (strain ATCC 39541 / Classical Ogawa 395 / O395).